The following is a 103-amino-acid chain: Small ribosomal subunit protein uS10 (103 aa).

This sequence belongs to the universal ribosomal protein uS10 family. Part of the 30S ribosomal subunit.

In terms of biological role, involved in the binding of tRNA to the ribosomes. In Haemophilus ducreyi (strain 35000HP / ATCC 700724), this protein is Small ribosomal subunit protein uS10.